The chain runs to 169 residues: Endoribonuclease YbeY (169 aa).

3 residues coordinate Zn(2+): H126, H130, and H136.

It belongs to the endoribonuclease YbeY family. It depends on Zn(2+) as a cofactor.

It localises to the cytoplasm. In terms of biological role, single strand-specific metallo-endoribonuclease involved in late-stage 70S ribosome quality control and in maturation of the 3' terminus of the 16S rRNA. The chain is Endoribonuclease YbeY from Bradyrhizobium sp. (strain BTAi1 / ATCC BAA-1182).